Reading from the N-terminus, the 675-residue chain is Secretogranin-1 (675 aa).

The first 20 residues, 1–20, serve as a signal peptide directing secretion; it reads MQRAMLLGLLGAAALAAVIS. Cysteine 36 and cysteine 57 are disulfide-bonded. Positions 64–90 are enriched in basic and acidic residues; that stretch reads SGKEVKGEEKGENENSKFEVRLLRDPS. Disordered regions lie at residues 64–507 and 528–555; these read SGKE…YPTT and NSDF…VTMT. Phosphoserine is present on residues serine 93, serine 99, serine 100, serine 129, and serine 147. The O-linked (Xyl...) (chondroitin sulfate) serine glycan is linked to serine 93. 2 stretches are compositionally biased toward basic and acidic residues: residues 148–161 and 168–248; these read KEAK…RGGK and GKIY…KPQE. A Phosphoserine modification is found at serine 190. The O-linked (Xyl...) (chondroitin sulfate) serine glycan is linked to serine 236. A compositionally biased stretch (acidic residues) spans 250–269; that stretch reads PDQDQSEEESEEGEEGEEGA. Residues serine 255, serine 259, serine 291, serine 309, and serine 333 each carry the phosphoserine modification. The span at 292–311 shows a compositional bias: basic and acidic residues; sequence YEGRRPLSEERKHAAGESKD. Tyrosine 339 carries the post-translational modification Sulfotyrosine. Basic and acidic residues-rich tracts occupy residues 361–410 and 429–452; these read GSEE…EGAK and SRQE…DTAK. A phosphoserine mark is found at serine 362, serine 372, serine 375, and serine 397. Position 469 is a sulfotyrosine (tyrosine 469). A phosphoserine mark is found at serine 490, serine 529, and serine 540. Position 563 is a sulfotyrosine (tyrosine 563). The interval 620–646 is disordered; sequence DFYDSEEQMGPHQEAEDEKDRADQRVL. Position 622 is a sulfotyrosine; partial (tyrosine 622). Residue serine 624 is modified to Phosphoserine. The segment covering 637 to 646 has biased composition (basic and acidic residues); it reads EKDRADQRVL. Arginine 674 carries the post-translational modification Arginine amide; in CCB peptide short form.

This sequence belongs to the chromogranin/secretogranin protein family. Interacts with ITPR1 in the secretory granules. In terms of processing, extensively processed in glucagonoma tissue by limited proteolysis at conserved basic residues. Alternative processing are seen in different tissues. The proglucagon-converting enzymes present in transformed alpha-cells are likely candidates to be involved in tissue-specific processing. As to expression, expressed in the brain, adrenal medulla and anterior pituitary. In the brain, localized to the hippocampal formation, the endocrine hypothalamus, the olfactory system, and in anatomically distinct structures in the pons-medulla.

The protein localises to the secreted. Its function is as follows. Secretogranin-1 is a neuroendocrine secretory granule protein, which may be the precursor for other biologically active peptides. This chain is Secretogranin-1 (Chgb), found in Rattus norvegicus (Rat).